The primary structure comprises 114 residues: Small ribosomal subunit protein bS16 (114 aa).

Belongs to the bacterial ribosomal protein bS16 family.

The sequence is that of Small ribosomal subunit protein bS16 from Prochlorococcus marinus subsp. pastoris (strain CCMP1986 / NIES-2087 / MED4).